We begin with the raw amino-acid sequence, 216 residues long: Probable RNA 2'-phosphotransferase 2 (216 aa).

Belongs to the KptA/TPT1 family.

In terms of biological role, removes the 2'-phosphate from RNA via an intermediate in which the phosphate is ADP-ribosylated by NAD followed by a presumed transesterification to release the RNA and generate ADP-ribose 1''-2''-cyclic phosphate (APPR&gt;P). May function as an ADP-ribosylase. This Archaeoglobus fulgidus (strain ATCC 49558 / DSM 4304 / JCM 9628 / NBRC 100126 / VC-16) protein is Probable RNA 2'-phosphotransferase 2 (kptA2).